Consider the following 459-residue polypeptide: Alcohol acyl transferase 1 allele GSa (459 aa).

Residues His164 and Asn385 each act as proton acceptor in the active site.

This sequence belongs to the plant acyltransferase family. As to expression, highly expressed in the cortex and skin of ripe fruit.

The enzyme catalyses butan-1-ol + acetyl-CoA = butyl acetate + CoA. It carries out the reaction butan-1-ol + butanoyl-CoA = butyl butanoate + CoA. The catalysed reaction is butan-1-ol + hexanoyl-CoA = butyl hexanoate + CoA. It catalyses the reaction hexan-1-ol + butanoyl-CoA = hexyl butanoate + CoA. The enzyme catalyses hexan-1-ol + acetyl-CoA = hexyl acetate + CoA. It carries out the reaction 2-methylbutan-1-ol + butanoyl-CoA = 2-methylbutyl butanoate + CoA. The catalysed reaction is ethanol + butanoyl-CoA = ethyl butanoate + CoA. It catalyses the reaction hexanoyl-CoA + ethanol = ethyl hexanoate + CoA. Functionally, involved in the biosynthesis of volatile esters which confer ripe apple fruit flavor. Alcohol acyl transferase that can use a wide range of alcohols as substrate, including 2-methylbutanol, hexanol and ethanol, to produce esters such as butyl butanoate, butyl hexanoate, hexyl butanoate, ethyl butanoate and ethyl hexanoate and, to some extent, 2-methylbutyl acetate (2MBA), butyl acetate, hexyl acetate and 2-methylbutyl butanoate (2MBB). The protein is Alcohol acyl transferase 1 allele GSa of Malus domestica (Apple).